We begin with the raw amino-acid sequence, 70 residues long: Large ribosomal subunit protein bL31 (70 aa).

Zn(2+) contacts are provided by Cys-16, Cys-18, Cys-37, and Cys-40.

Belongs to the bacterial ribosomal protein bL31 family. Type A subfamily. In terms of assembly, part of the 50S ribosomal subunit. Zn(2+) serves as cofactor.

Its function is as follows. Binds the 23S rRNA. The protein is Large ribosomal subunit protein bL31 of Cronobacter sakazakii (strain ATCC BAA-894) (Enterobacter sakazakii).